A 163-amino-acid chain; its full sequence is Nucleotide-binding protein Mvan_0997 (163 aa).

Belongs to the YajQ family.

Its function is as follows. Nucleotide-binding protein. The polypeptide is Nucleotide-binding protein Mvan_0997 (Mycolicibacterium vanbaalenii (strain DSM 7251 / JCM 13017 / BCRC 16820 / KCTC 9966 / NRRL B-24157 / PYR-1) (Mycobacterium vanbaalenii)).